An 842-amino-acid polypeptide reads, in one-letter code: Protein translocase subunit SecA (842 aa).

Residues Gln85, 103–107 (GEGKT), and Asp493 each bind ATP. 4 residues coordinate Zn(2+): Cys825, Cys827, Cys836, and His837.

This sequence belongs to the SecA family. In terms of assembly, monomer and homodimer. Part of the essential Sec protein translocation apparatus which comprises SecA, SecYEG and auxiliary proteins SecDF. Other proteins may also be involved. Zn(2+) serves as cofactor.

The protein localises to the cell membrane. Its subcellular location is the cytoplasm. The enzyme catalyses ATP + H2O + cellular proteinSide 1 = ADP + phosphate + cellular proteinSide 2.. Functionally, part of the Sec protein translocase complex. Interacts with the SecYEG preprotein conducting channel. Has a central role in coupling the hydrolysis of ATP to the transfer of proteins into and across the cell membrane, serving as an ATP-driven molecular motor driving the stepwise translocation of polypeptide chains across the membrane. This is Protein translocase subunit SecA from Streptococcus equi subsp. zooepidemicus (strain MGCS10565).